Reading from the N-terminus, the 402-residue chain is 4-hydroxy-3-methylbut-2-en-1-yl diphosphate synthase (ferredoxin) (402 aa).

[4Fe-4S] cluster is bound by residues Cys311, Cys314, Cys345, and Glu352.

The protein belongs to the IspG family. [4Fe-4S] cluster serves as cofactor.

The catalysed reaction is (2E)-4-hydroxy-3-methylbut-2-enyl diphosphate + 2 oxidized [2Fe-2S]-[ferredoxin] + H2O = 2-C-methyl-D-erythritol 2,4-cyclic diphosphate + 2 reduced [2Fe-2S]-[ferredoxin] + H(+). The protein operates within isoprenoid biosynthesis; isopentenyl diphosphate biosynthesis via DXP pathway; isopentenyl diphosphate from 1-deoxy-D-xylulose 5-phosphate: step 5/6. Converts 2C-methyl-D-erythritol 2,4-cyclodiphosphate (ME-2,4cPP) into 1-hydroxy-2-methyl-2-(E)-butenyl 4-diphosphate, using ferredoxin I (PetF) as the reducing agent. This Thermosynechococcus vestitus (strain NIES-2133 / IAM M-273 / BP-1) protein is 4-hydroxy-3-methylbut-2-en-1-yl diphosphate synthase (ferredoxin).